The sequence spans 128 residues: Small ribosomal subunit protein uS11 (128 aa).

It belongs to the universal ribosomal protein uS11 family. In terms of assembly, part of the 30S ribosomal subunit. Interacts with proteins S7 and S18. Binds to IF-3.

In terms of biological role, located on the platform of the 30S subunit, it bridges several disparate RNA helices of the 16S rRNA. Forms part of the Shine-Dalgarno cleft in the 70S ribosome. This is Small ribosomal subunit protein uS11 from Desulfosudis oleivorans (strain DSM 6200 / JCM 39069 / Hxd3) (Desulfococcus oleovorans).